The primary structure comprises 874 residues: Alanine--tRNA ligase (874 aa).

Residues H562, H566, C664, and H668 each coordinate Zn(2+).

Belongs to the class-II aminoacyl-tRNA synthetase family. Zn(2+) is required as a cofactor.

Its subcellular location is the cytoplasm. It catalyses the reaction tRNA(Ala) + L-alanine + ATP = L-alanyl-tRNA(Ala) + AMP + diphosphate. In terms of biological role, catalyzes the attachment of alanine to tRNA(Ala) in a two-step reaction: alanine is first activated by ATP to form Ala-AMP and then transferred to the acceptor end of tRNA(Ala). Also edits incorrectly charged Ser-tRNA(Ala) and Gly-tRNA(Ala) via its editing domain. In Shewanella sediminis (strain HAW-EB3), this protein is Alanine--tRNA ligase.